The following is a 255-amino-acid chain: Large ribosomal subunit protein uL4 (255 aa).

This sequence belongs to the universal ribosomal protein uL4 family. In terms of assembly, part of the 50S ribosomal subunit.

In terms of biological role, one of the primary rRNA binding proteins, this protein initially binds near the 5'-end of the 23S rRNA. It is important during the early stages of 50S assembly. It makes multiple contacts with different domains of the 23S rRNA in the assembled 50S subunit and ribosome. Its function is as follows. Forms part of the polypeptide exit tunnel. This chain is Large ribosomal subunit protein uL4, found in Pyrococcus furiosus (strain ATCC 43587 / DSM 3638 / JCM 8422 / Vc1).